Reading from the N-terminus, the 289-residue chain is Thymidylate synthase (289 aa).

Residues R21 and 150 to 151 contribute to the dUMP site; that span reads RR. Catalysis depends on C170, which acts as the Nucleophile. DUMP-binding positions include 191–194, N202, and 232–234; these read RSAD and HIY. D194 serves as a coordination point for (6R)-5,10-methylene-5,6,7,8-tetrahydrofolate. A288 serves as a coordination point for (6R)-5,10-methylene-5,6,7,8-tetrahydrofolate.

Belongs to the thymidylate synthase family. Bacterial-type ThyA subfamily. Homodimer.

The protein localises to the cytoplasm. It catalyses the reaction dUMP + (6R)-5,10-methylene-5,6,7,8-tetrahydrofolate = 7,8-dihydrofolate + dTMP. It functions in the pathway pyrimidine metabolism; dTTP biosynthesis. Its function is as follows. Catalyzes the reductive methylation of 2'-deoxyuridine-5'-monophosphate (dUMP) to 2'-deoxythymidine-5'-monophosphate (dTMP) while utilizing 5,10-methylenetetrahydrofolate (mTHF) as the methyl donor and reductant in the reaction, yielding dihydrofolate (DHF) as a by-product. This enzymatic reaction provides an intracellular de novo source of dTMP, an essential precursor for DNA biosynthesis. This chain is Thymidylate synthase, found in Malacoplasma penetrans (strain HF-2) (Mycoplasma penetrans).